The chain runs to 112 residues: cAMP-regulated phosphoprotein 19 (112 aa).

Over residues 1 to 11 (MSAESPEPASA) the composition is skewed to low complexity. The disordered stretch occupies residues 1–49 (MSAESPEPASAEEQKEMEDKVLSPEKAEEAKLKARYPHLGQKPGGSDFL). A compositionally biased stretch (basic and acidic residues) spans 12–32 (EEQKEMEDKVLSPEKAEEAKL). Phosphoserine; by GWL occurs at positions 62 and 104. Positions 72-112 (MKNKQLPTAAPDKTEVTGDHIPTPQDLPQRKPSLVASKLAG) are disordered. Position 104 is a phosphoserine; by PKA (S104).

This sequence belongs to the endosulfine family. As to quaternary structure, interacts (when phosphorylated at Ser-62) with PPP2R2D. In terms of processing, phosphorylation at Ser-62 by MASTL/GWL during mitosis is essential for interaction with PPP2R2D (PR55-delta) and subsequent inactivation of PP2A.

Its subcellular location is the cytoplasm. Functionally, protein phosphatase inhibitor that specifically inhibits protein phosphatase 2A (PP2A) during mitosis. Inhibition of PP2A is enhanced when ARPP19 is phosphorylated. When phosphorylated at Ser-62 during mitosis, specifically interacts with PPP2R2D (PR55-delta) and inhibits its activity, leading to inactivation of PP2A, an essential condition to keep cyclin-B1-CDK1 activity high during M phase. The sequence is that of cAMP-regulated phosphoprotein 19 (ARPP19) from Taeniopygia guttata (Zebra finch).